Reading from the N-terminus, the 345-residue chain is 3-isopropylmalate dehydrogenase (345 aa).

Substrate-binding residues include Arg-94, Arg-104, Arg-132, and Asp-216. The Mg(2+) site is built by Asp-216, Asp-240, and Asp-244. 274–286 provides a ligand contact to NAD(+); it reads GSAPDIAGQGIAN.

This sequence belongs to the isocitrate and isopropylmalate dehydrogenases family. LeuB type 1 subfamily. As to quaternary structure, homodimer. Mg(2+) is required as a cofactor. Requires Mn(2+) as cofactor.

The protein localises to the cytoplasm. It carries out the reaction (2R,3S)-3-isopropylmalate + NAD(+) = 4-methyl-2-oxopentanoate + CO2 + NADH. It functions in the pathway amino-acid biosynthesis; L-leucine biosynthesis; L-leucine from 3-methyl-2-oxobutanoate: step 3/4. Its function is as follows. Catalyzes the oxidation of 3-carboxy-2-hydroxy-4-methylpentanoate (3-isopropylmalate) to 3-carboxy-4-methyl-2-oxopentanoate. The product decarboxylates to 4-methyl-2 oxopentanoate. This Streptococcus pneumoniae (strain ATCC BAA-255 / R6) protein is 3-isopropylmalate dehydrogenase.